The sequence spans 99 residues: Transmembrane protein 14A (99 aa).

The next 3 helical transmembrane spans lie at M1–K21, G24–Y44, and P79–L99.

This sequence belongs to the TMEM14 family.

The protein resides in the mitochondrion membrane. Its subcellular location is the endoplasmic reticulum membrane. Its function is as follows. Inhibits apoptosis via negative regulation of the mitochondrial outer membrane permeabilization involved in apoptotic signaling pathway. The polypeptide is Transmembrane protein 14A (TMEM14A) (Sus scrofa (Pig)).